Reading from the N-terminus, the 510-residue chain is Glycogen synthase (510 aa).

An ADP-alpha-D-glucose-binding site is contributed by lysine 18.

The protein belongs to the glycosyltransferase 1 family. Bacterial/plant glycogen synthase subfamily.

The catalysed reaction is [(1-&gt;4)-alpha-D-glucosyl](n) + ADP-alpha-D-glucose = [(1-&gt;4)-alpha-D-glucosyl](n+1) + ADP + H(+). It functions in the pathway glycan biosynthesis; glycogen biosynthesis. Synthesizes alpha-1,4-glucan chains using ADP-glucose. The polypeptide is Glycogen synthase (Bordetella parapertussis (strain 12822 / ATCC BAA-587 / NCTC 13253)).